The following is a 141-amino-acid chain: Large ribosomal subunit protein uL11 (141 aa).

Belongs to the universal ribosomal protein uL11 family. As to quaternary structure, part of the ribosomal stalk of the 50S ribosomal subunit. Interacts with L10 and the large rRNA to form the base of the stalk. L10 forms an elongated spine to which L12 dimers bind in a sequential fashion forming a multimeric L10(L12)X complex. One or more lysine residues are methylated.

In terms of biological role, forms part of the ribosomal stalk which helps the ribosome interact with GTP-bound translation factors. The chain is Large ribosomal subunit protein uL11 from Levilactobacillus brevis (strain ATCC 367 / BCRC 12310 / CIP 105137 / JCM 1170 / LMG 11437 / NCIMB 947 / NCTC 947) (Lactobacillus brevis).